Reading from the N-terminus, the 426-residue chain is Serine--tRNA ligase (426 aa).

T233–E235 serves as a coordination point for L-serine. Residue R264 to E266 participates in ATP binding. E287 provides a ligand contact to L-serine. Residue E351–S354 coordinates ATP. S387 lines the L-serine pocket.

This sequence belongs to the class-II aminoacyl-tRNA synthetase family. Type-1 seryl-tRNA synthetase subfamily. As to quaternary structure, homodimer. The tRNA molecule binds across the dimer.

Its subcellular location is the cytoplasm. It catalyses the reaction tRNA(Ser) + L-serine + ATP = L-seryl-tRNA(Ser) + AMP + diphosphate + H(+). The enzyme catalyses tRNA(Sec) + L-serine + ATP = L-seryl-tRNA(Sec) + AMP + diphosphate + H(+). It participates in aminoacyl-tRNA biosynthesis; selenocysteinyl-tRNA(Sec) biosynthesis; L-seryl-tRNA(Sec) from L-serine and tRNA(Sec): step 1/1. Functionally, catalyzes the attachment of serine to tRNA(Ser). Is also able to aminoacylate tRNA(Sec) with serine, to form the misacylated tRNA L-seryl-tRNA(Sec), which will be further converted into selenocysteinyl-tRNA(Sec). This chain is Serine--tRNA ligase, found in Clostridium tetani (strain Massachusetts / E88).